The primary structure comprises 109 residues: Large ribosomal subunit protein uL22 (109 aa).

Belongs to the universal ribosomal protein uL22 family. As to quaternary structure, part of the 50S ribosomal subunit.

Its function is as follows. This protein binds specifically to 23S rRNA; its binding is stimulated by other ribosomal proteins, e.g. L4, L17, and L20. It is important during the early stages of 50S assembly. It makes multiple contacts with different domains of the 23S rRNA in the assembled 50S subunit and ribosome. The globular domain of the protein is located near the polypeptide exit tunnel on the outside of the subunit, while an extended beta-hairpin is found that lines the wall of the exit tunnel in the center of the 70S ribosome. This chain is Large ribosomal subunit protein uL22, found in Bordetella avium (strain 197N).